A 103-amino-acid chain; its full sequence is Large ribosomal subunit protein uL24 (103 aa).

This sequence belongs to the universal ribosomal protein uL24 family. Part of the 50S ribosomal subunit.

In terms of biological role, one of two assembly initiator proteins, it binds directly to the 5'-end of the 23S rRNA, where it nucleates assembly of the 50S subunit. Its function is as follows. One of the proteins that surrounds the polypeptide exit tunnel on the outside of the subunit. This Geobacillus stearothermophilus (Bacillus stearothermophilus) protein is Large ribosomal subunit protein uL24.